The primary structure comprises 402 residues: Acetylornithine aminotransferase (402 aa).

Residues 117–118 (GA) and phenylalanine 143 each bind pyridoxal 5'-phosphate. Arginine 146 is a binding site for N(2)-acetyl-L-ornithine. A pyridoxal 5'-phosphate-binding site is contributed by 231-234 (DEVQ). The residue at position 260 (lysine 260) is an N6-(pyridoxal phosphate)lysine. A N(2)-acetyl-L-ornithine-binding site is contributed by threonine 288. Residue threonine 289 participates in pyridoxal 5'-phosphate binding.

This sequence belongs to the class-III pyridoxal-phosphate-dependent aminotransferase family. ArgD subfamily. Homodimer. Pyridoxal 5'-phosphate is required as a cofactor.

Its subcellular location is the cytoplasm. It catalyses the reaction N(2)-acetyl-L-ornithine + 2-oxoglutarate = N-acetyl-L-glutamate 5-semialdehyde + L-glutamate. It participates in amino-acid biosynthesis; L-arginine biosynthesis; N(2)-acetyl-L-ornithine from L-glutamate: step 4/4. This is Acetylornithine aminotransferase from Corynebacterium efficiens (strain DSM 44549 / YS-314 / AJ 12310 / JCM 11189 / NBRC 100395).